A 43-amino-acid polypeptide reads, in one-letter code: Defensin (43 aa).

3 cysteine pairs are disulfide-bonded: Cys-3-Cys-34, Cys-20-Cys-39, and Cys-24-Cys-41.

The protein belongs to the invertebrate defensin family. Type 1 subfamily.

The protein localises to the secreted. In terms of biological role, antibacterial peptide. Affects Gram-positive bacteria M.luteus, B.megaterium, A.viridans, S.aureus and S.saprophyticus. Moderate activity against P.acidilactici and B.subtilis QB935. Also affects Gram-negative bacterium, D22 form of E.coli. The sequence is that of Defensin from Pyrrhocoris apterus (Sap sucking bug).